Reading from the N-terminus, the 188-residue chain is ATP synthase subunit delta (188 aa).

Belongs to the ATPase delta chain family. F-type ATPases have 2 components, F(1) - the catalytic core - and F(0) - the membrane proton channel. F(1) has five subunits: alpha(3), beta(3), gamma(1), delta(1), epsilon(1). F(0) has three main subunits: a(1), b(2) and c(10-14). The alpha and beta chains form an alternating ring which encloses part of the gamma chain. F(1) is attached to F(0) by a central stalk formed by the gamma and epsilon chains, while a peripheral stalk is formed by the delta and b chains.

The protein localises to the cell inner membrane. In terms of biological role, f(1)F(0) ATP synthase produces ATP from ADP in the presence of a proton or sodium gradient. F-type ATPases consist of two structural domains, F(1) containing the extramembraneous catalytic core and F(0) containing the membrane proton channel, linked together by a central stalk and a peripheral stalk. During catalysis, ATP synthesis in the catalytic domain of F(1) is coupled via a rotary mechanism of the central stalk subunits to proton translocation. This protein is part of the stalk that links CF(0) to CF(1). It either transmits conformational changes from CF(0) to CF(1) or is implicated in proton conduction. The chain is ATP synthase subunit delta from Rhizobium rhizogenes (strain K84 / ATCC BAA-868) (Agrobacterium radiobacter).